A 219-amino-acid chain; its full sequence is Uridylate kinase (219 aa).

Residue 9–10 (GS) coordinates ATP. UMP is bound at residue Gly-41. Residues Gly-42 and Arg-46 each coordinate ATP. Residues Asp-63 and 110-116 (TFPGHTT) contribute to the UMP site. Positions 136, 137, 142, and 145 each coordinate ATP.

Belongs to the UMP kinase family. As to quaternary structure, homohexamer.

The protein localises to the cytoplasm. The enzyme catalyses UMP + ATP = UDP + ADP. It functions in the pathway pyrimidine metabolism; CTP biosynthesis via de novo pathway; UDP from UMP (UMPK route): step 1/1. With respect to regulation, inhibited by UTP. In terms of biological role, catalyzes the reversible phosphorylation of UMP to UDP. This chain is Uridylate kinase, found in Archaeoglobus fulgidus (strain ATCC 49558 / DSM 4304 / JCM 9628 / NBRC 100126 / VC-16).